Here is a 382-residue protein sequence, read N- to C-terminus: uncharacterized protein (382 aa).

Residues 1 to 7 (MSIYTRP) are Cytoplasmic-facing. The chain crosses the membrane as a helical span at residues 8–28 (VMLLLCGLLLLTLAIAVLNTL). Residues 29-44 (VPLWLAQANLPTWQVG) lie on the Periplasmic side of the membrane. A helical membrane pass occupies residues 45-65 (MVSSSYFTGNLVGTLFTGYLI). Residues 66–74 (KRIGFNRSY) are Cytoplasmic-facing. The chain crosses the membrane as a helical span at residues 75–95 (YLASLIFAAGCVGLGVMVGFW). Over 96–101 (SWMSWR) the chain is Periplasmic. The chain crosses the membrane as a helical span at residues 102-122 (FIAGIGCAMIWVVVESALMCS). Residues 123–130 (GTSHNRGR) are Cytoplasmic-facing. Residues 131 to 151 (LLAAYMMVYYMGTFLGQLLVS) form a helical membrane-spanning segment. At 152–156 (KVSGE) the chain is on the periplasmic side. The chain crosses the membrane as a helical span at residues 157–177 (LLHVLPWVTGMILAGILPLLF). The Cytoplasmic portion of the chain corresponds to 178-203 (TRIVNQQTQARHSSSISAMLKLRQAR). Residues 204-224 (LGVNGCIISGIVLGSLYGLMP) traverse the membrane as a helical segment. Residues 225–230 (LYLKHQ) are Periplasmic-facing. Residues 231 to 251 (GMANASIGFWMAVLVSAGILG) form a helical membrane-spanning segment. At 252-269 (QWPMGRLADKFGRLLVLR) the chain is on the cytoplasmic side. 2 consecutive transmembrane segments (helical) span residues 270–290 (VQVF…AMAP) and 291–311 (ALFI…AWAC). At 312-324 (EKVEHHQLVAMNQ) the chain is on the cytoplasmic side. Residues 325 to 345 (ALLLSYTVGSLLGPSFAAMLM) traverse the membrane as a helical segment. Over 346 to 348 (QNY) the chain is Periplasmic. A helical transmembrane segment spans residues 349-369 (SDNLLFIMIASVSFIYLLMLL). Residues 370-382 (RNVGQTPNPVAHI) are Cytoplasmic-facing.

This sequence belongs to the major facilitator superfamily. YcaD (TC 2.A.1.26) family.

Its subcellular location is the cell inner membrane. This is an uncharacterized protein from Salmonella typhi.